The sequence spans 932 residues: Serotype-specific antigen 1 (932 aa).

An N-terminal signal peptide occupies residues 1–24; sequence MYKIKHSFNKTLIAISISSFLSIA. One can recognise a Peptidase S8 domain in the interval 25-407; it reads YATESIENPQ…WGLINLKKAV (383 aa). Active-site charge relay system residues include Asp-58, His-116, and Ser-351. Positions 669-932 constitute an Autotransporter domain; that stretch reads HTPLQTTVWA…PIWLESKCWL (264 aa).

It belongs to the peptidase S8 family.

It localises to the cell outer membrane. The sequence is that of Serotype-specific antigen 1 (ssa1) from Mannheimia haemolytica (Pasteurella haemolytica).